The following is a 280-amino-acid chain: Digeranylgeranylglyceryl phosphate synthase (280 aa).

The next 9 helical transmembrane spans lie at 4–24 (AAYL…AGIL), 27–47 (IIAT…VLTI), 83–103 (LMYA…FTPL), 104–124 (PLAG…SFLK), 128–148 (LIGN…GGAI), 150–170 (GTQG…VMLA), 199–219 (ATIY…LLLY), 222–242 (WGAF…FGAI), and 260–280 (KILK…AVLL).

Belongs to the UbiA prenyltransferase family. DGGGP synthase subfamily. Mg(2+) serves as cofactor.

It is found in the cell membrane. The enzyme catalyses sn-3-O-(geranylgeranyl)glycerol 1-phosphate + (2E,6E,10E)-geranylgeranyl diphosphate = 2,3-bis-O-(geranylgeranyl)-sn-glycerol 1-phosphate + diphosphate. It participates in membrane lipid metabolism; glycerophospholipid metabolism. Its function is as follows. Prenyltransferase that catalyzes the transfer of the geranylgeranyl moiety of geranylgeranyl diphosphate (GGPP) to the C2 hydroxyl of (S)-3-O-geranylgeranylglyceryl phosphate (GGGP). This reaction is the second ether-bond-formation step in the biosynthesis of archaeal membrane lipids. The protein is Digeranylgeranylglyceryl phosphate synthase of Methanospirillum hungatei JF-1 (strain ATCC 27890 / DSM 864 / NBRC 100397 / JF-1).